A 721-amino-acid chain; its full sequence is Leucine-rich repeat flightless-interacting protein 2 (721 aa).

The DVL3-binding stretch occupies residues 1–370; that stretch reads MGTPASGRKR…YMQGLKELKE (370 aa). A Phosphoserine modification is found at Ser-18. Residues 22–49 are a coiled coil; sequence EALSNIAREAEARLAAKRAARAEARDIR. Phosphoserine occurs at positions 96, 101, 168, 173, 190, and 202. Disordered regions lie at residues 232–262 and 295–338; these read SARS…ESVV and KSDK…IDPD. Polar residues-rich tracts occupy residues 237 to 251 and 305 to 338; these read PGFT…VSSD and TRPS…IDPD. A phosphoserine mark is found at Ser-309, Ser-312, Ser-320, Ser-324, and Ser-328. Thr-331 is subject to Phosphothreonine. Phosphoserine is present on residues Ser-332 and Ser-333. Coiled-coil stretches lie at residues 349 to 524 and 566 to 714; these read DLKD…GEKH and LDVR…KANR.

The protein belongs to the LRRFIP family. As to quaternary structure, interacts (via N-terminus) with DVL3. Interacts with FLII. Weakly interacts with MYD88 in resting cells. Following LPS-stimulation, the interaction with MYD88 is rapidly enhanced; the complex gradually dissociates to basal levels after 6 hours of stimulation. Interaction with MYD88 is regulated by LPS-induced phosphorylation at Ser-202. In the presence of LPS, competes with FLII for MYD88-binding. In terms of processing, ser-190 and Ser-202 are phosphorylated in response to LPS stimulation. Ser-202 phosphorylation regulates the LPS-induced interaction with MYD88. In terms of tissue distribution, widely expressed, with highest levels in heart and skeletal muscle.

In terms of biological role, may function as activator of the canonical Wnt signaling pathway, in association with DVL3, upstream of CTNNB1/beta-catenin. Positively regulates Toll-like receptor (TLR) signaling in response to agonist probably by competing with the negative FLII regulator for MYD88-binding. The sequence is that of Leucine-rich repeat flightless-interacting protein 2 (LRRFIP2) from Homo sapiens (Human).